The sequence spans 466 residues: Asparagine--tRNA ligase (466 aa).

It belongs to the class-II aminoacyl-tRNA synthetase family. In terms of assembly, homodimer.

Its subcellular location is the cytoplasm. The catalysed reaction is tRNA(Asn) + L-asparagine + ATP = L-asparaginyl-tRNA(Asn) + AMP + diphosphate + H(+). This is Asparagine--tRNA ligase from Shewanella sp. (strain MR-4).